The sequence spans 267 residues: uncharacterized protein (267 aa).

The interval 72–267 (LTENNNNNNT…EEKKKKKKKK (196 aa)) is disordered. The span at 122 to 145 (DSVSSSTTTTIITNNKKINNNNNN) shows a compositional bias: low complexity. A compositionally biased stretch (basic and acidic residues) spans 159–175 (ENEKSVQKSKKEKESPK). Over residues 194–218 (SESSSSSSSSSSSESSSSESESSSS) the composition is skewed to low complexity.

This is an uncharacterized protein from Dictyostelium discoideum (Social amoeba).